The sequence spans 481 residues: G-protein coupled receptor 37-like 1 (481 aa).

The signal sequence occupies residues 1–24; the sequence is MRWLWPLAVSLAVVLAVGPSEVSG. Over 25-134 the chain is Extracellular; that stretch reads AATLSLGGHR…ESSYSAYAVM (110 aa). 2 disordered regions span residues 30 to 55 and 76 to 107; these read LGGHRAKVQEQQSRPRRGTKDEGPKE and LQPTKPLVATSPNPDKDGATSESGQELRTNLT. A compositionally biased stretch (polar residues) spans 95–107; that stretch reads TSESGQELRTNLT. A glycan (N-linked (GlcNAc...) asparagine) is linked at Asn105. The helical transmembrane segment at 135–155 threads the bilayer; sequence LLALVVFAVGIVGNLSVMCIV. Residues 156-167 lie on the Cytoplasmic side of the membrane; sequence WHSYYLKSAWNS. Residues 168 to 188 form a helical membrane-spanning segment; that stretch reads ILASLALWDFLVLFFCLPIVI. The Extracellular portion of the chain corresponds to 189–205; that stretch reads FNEITKQRLLGDVSCRA. The cysteines at positions 203 and 286 are disulfide-linked. A helical membrane pass occupies residues 206–226; it reads VPFMEVSSLGVTTFSLCALGI. The Cytoplasmic segment spans residues 227–251; sequence DRFHVATSTLPKVRPIERCQSILAK. Residues 252–272 form a helical membrane-spanning segment; it reads LAVIWVGSMMLAVPELLLWQL. At 273–310 the chain is on the extracellular side; the sequence is AQEPTPTMGTVDSCIMKPSADLPESLYSLVMTYQNARM. The chain crosses the membrane as a helical span at residues 311–331; sequence WWYFGCYFCLPILFTVTCQLV. The Cytoplasmic segment spans residues 332–360; sequence TWRVRGPPGRKPECRAGRHEQCESQLNST. The helical transmembrane segment at 361 to 381 threads the bilayer; it reads VVGLTVVYAFCTLPENICNIV. At 382-398 the chain is on the extracellular side; that stretch reads VAYLSTELTRQTLDLLG. Residues 399–419 form a helical membrane-spanning segment; sequence LINQFSTFFKGAITPVLLLCI. The Cytoplasmic segment spans residues 420–481; sequence CRPLGQAFLD…PPLLPLGTPC (62 aa). At Ser471 the chain carries Phosphoserine. Thr479 carries the phosphothreonine modification.

This sequence belongs to the G-protein coupled receptor 1 family. Interacts with the PTCH1 receptor. Undergoes metalloprotease-mediated cleavage which reduces its constitutive activity. Post-translationally, ubiquitinated. In terms of tissue distribution, highly expressed in brain.

It localises to the cell membrane. Its subcellular location is the cell projection. The protein resides in the cilium membrane. In terms of biological role, G-protein coupled receptor. Has been shown to bind the neuroprotective and glioprotective factor prosaposin (PSAP), leading to endocytosis followed by an ERK phosphorylation cascade. However, other studies have shown that prosaposin does not increase activity. It has been suggested that GPR37L1 is a constitutively active receptor which signals through the guanine nucleotide-binding protein G(s) subunit alpha. Participates in the regulation of postnatal cerebellar development by modulating the Shh pathway. Regulates baseline blood pressure in females and protects against cardiovascular stress in males. Mediates inhibition of astrocyte glutamate transporters and reduction in neuronal N-methyl-D-aspartate receptor activity. This chain is G-protein coupled receptor 37-like 1 (Gpr37l1), found in Rattus norvegicus (Rat).